We begin with the raw amino-acid sequence, 356 residues long: MAGLKLQAVTKSWDGKTQVIKPLTLDVADGEFIVMVGPSGCGKSTLLRMVAGLERVTTGDIWIDRKRVTEMEPKDRGIAMVFQNYALYPHMSVEENMAWGLKIRGMGKQQIAERVKEAARILELDGLLKRRPRELSGGQRQRVAMGRAIVREPAVFLFDEPLSNLDAKLRVQMRLELQQLHRRLKTTSLYVTHDQVEAMTLAQRVMVMNGGVAEQIGTPVEVYEKPASLFVASFIGSPAMNLLAGRVNNEGTHFELDGGITLPLNGGYRQYAGRKMTLGIRPEHIALSSQAEGGVPLVMDTLEILGADNLAHGRWGEQKLVVRLAHQERPTAGSTLWLHLPENQLHLFDGETGQRV.

The region spanning 4 to 235 (LKLQAVTKSW…PASLFVASFI (232 aa)) is the ABC transporter domain. 37–44 (GPSGCGKS) is a binding site for ATP.

It belongs to the ABC transporter superfamily. sn-glycerol-3-phosphate importer (TC 3.A.1.1.3) family. The complex is composed of two ATP-binding proteins (UgpC), two transmembrane proteins (UgpA and UgpE) and a solute-binding protein (UgpB).

It is found in the cell inner membrane. The catalysed reaction is sn-glycerol 3-phosphate(out) + ATP + H2O = sn-glycerol 3-phosphate(in) + ADP + phosphate + H(+). Its function is as follows. Part of the ABC transporter complex UgpBAEC involved in sn-glycerol-3-phosphate (G3P) import. Responsible for energy coupling to the transport system. The chain is sn-glycerol-3-phosphate import ATP-binding protein UgpC from Escherichia coli (strain UTI89 / UPEC).